A 433-amino-acid chain; its full sequence is Peptidoglycan DD-endopeptidase ShyC (433 aa).

Residues W10–L30 traverse the membrane as a helical segment. Residues H299, D303, and H380 each coordinate Zn(2+).

The protein belongs to the peptidase M23B family. Zn(2+) serves as cofactor.

It localises to the cell inner membrane. It functions in the pathway cell wall degradation; peptidoglycan degradation. With respect to regulation, reduced activity in 0.5 mM EDTA and a complete loss of activity at higher EDTA concentrations. Functionally, cell wall peptidoglycan (PG) DD-endopeptidase. Hydrolyzes peptide cross-links which covalently connect adjacent PG strands probably to allow insertion of new glycans and thus cell wall expansion. Degrades purified whole PG sacculi in vitro. The sequence is that of Peptidoglycan DD-endopeptidase ShyC from Vibrio cholerae serotype O1 (strain ATCC 39315 / El Tor Inaba N16961).